We begin with the raw amino-acid sequence, 712 residues long: Ribosomal RNA large subunit methyltransferase K/L (712 aa).

In terms of domain architecture, THUMP spans 46 to 157 (GAYQALLHSR…REKLIVSLDL (112 aa)).

The protein belongs to the methyltransferase superfamily. RlmKL family.

It localises to the cytoplasm. The enzyme catalyses guanosine(2445) in 23S rRNA + S-adenosyl-L-methionine = N(2)-methylguanosine(2445) in 23S rRNA + S-adenosyl-L-homocysteine + H(+). It catalyses the reaction guanosine(2069) in 23S rRNA + S-adenosyl-L-methionine = N(2)-methylguanosine(2069) in 23S rRNA + S-adenosyl-L-homocysteine + H(+). Specifically methylates the guanine in position 2445 (m2G2445) and the guanine in position 2069 (m7G2069) of 23S rRNA. This Haemophilus ducreyi (strain 35000HP / ATCC 700724) protein is Ribosomal RNA large subunit methyltransferase K/L.